The chain runs to 230 residues: Ribosome maturation factor RimM (230 aa).

A PRC barrel domain is found at 149–230; that stretch reads ADEFYWVDLI…RVVVDWEADY (82 aa).

This sequence belongs to the RimM family. As to quaternary structure, binds ribosomal protein uS19.

Its subcellular location is the cytoplasm. In terms of biological role, an accessory protein needed during the final step in the assembly of 30S ribosomal subunit, possibly for assembly of the head region. Essential for efficient processing of 16S rRNA. May be needed both before and after RbfA during the maturation of 16S rRNA. It has affinity for free ribosomal 30S subunits but not for 70S ribosomes. This chain is Ribosome maturation factor RimM, found in Burkholderia mallei (strain NCTC 10229).